Here is a 188-residue protein sequence, read N- to C-terminus: Probable chorismate pyruvate-lyase (188 aa).

Residues Arg77, Leu115, and Glu174 each coordinate substrate.

It belongs to the UbiC family.

Its subcellular location is the cytoplasm. It carries out the reaction chorismate = 4-hydroxybenzoate + pyruvate. It participates in cofactor biosynthesis; ubiquinone biosynthesis. Removes the pyruvyl group from chorismate, with concomitant aromatization of the ring, to provide 4-hydroxybenzoate (4HB) for the ubiquinone pathway. This Shewanella loihica (strain ATCC BAA-1088 / PV-4) protein is Probable chorismate pyruvate-lyase.